The sequence spans 187 residues: MLNLDFTHKTTQATPRLHAVATEFLRVSNDVAELHKLSSKLTSDPYLFVEFVKTIRGFLSVQTALGLSGEIDTVFLQVIKGWFPDLITETFSFLIVVRIINLFNKRANSKVYPDILRRIGNNALYLTRNPLRGICLVEKAINVRDPDCTVFIALKLHSHYVELSFEELGSNIVEKLLSVGESGICGV.

The stretch at 20–42 (VATEFLRVSNDVAELHKLSSKLT) is one Pumilio 1; degenerate repeat. One copy of the Pumilio 2; degenerate repeat lies at 43–78 (SDPYLFVEFVKTIRGFLSVQTALGLSGEIDTVFLQV). Residues 79 to 116 (IKGWFPDLITETFSFLIVVRIINLFNKRANSKVYPDIL) form a Pumilio 3; degenerate repeat. The Pumilio 4; degenerate repeat unit spans residues 117–154 (RRIGNNALYLTRNPLRGICLVEKAINVRDPDCTVFIAL). A Pumilio 5 repeat occupies 155 to 187 (KLHSHYVELSFEELGSNIVEKLLSVGESGICGV).

The protein localises to the cytoplasm. Functionally, sequence-specific RNA-binding protein that regulates translation and mRNA stability by binding the 3'-UTR of target mRNAs. The chain is Pumilio homolog 26 (APUM26) from Arabidopsis thaliana (Mouse-ear cress).